The chain runs to 623 residues: MTQKLLYVSPVESFVDTSFFQELSRLKLDIHGLSTSQITIHSYLDLKNIPSVSSACHLFLDQQSFNSEDICASSERVRLEGKLYNCNSLEEFKSLDKQQYLAEQGQKIYTKALEDINSAIGFSIISFADLKKYVFYYWVCTPLFQHENQQISILDGPEDIDASFNDKAKVWFTNHYSNWVAIVLENGDINEYTKGLNTSSIRGLLIRDTSNKQDMPSAFLRNFITIFSLDYPEAKELDVFLMRSSTIKSIKLRIRLSETEHTKLKFSGWERNSLSKLMPRAVDLSALIDPLKVAEQSVDLNLKLMKWRIAPELDLDCIRNNKVLILGSGTLGCYTARSLMAWGCRNITLVDNGRVSYSNPVRQPLFEFSDVGKEKAVAAAASLKRVFPLINAKGVQLDIPMIGHPVKDENNERKHFDALVDLIKSHDTMFLLLDSRETRWLPTLLGKFYDKIVMNAALGFDSYLIMKHGNIDDNFGCYFCNDVVVPTDSLTGRTLDQMCTVTRPGVAMLAASQAVELFVSNLQSRGQENVLGECPHQIRGFVNNFTTLKLQSPAYDNCSACSRHILNEYNKRGWDFVKQALNDNNYIEELSGLRRIKEEVENMELEGGEIKIIDSEDDGFEII.

The GXGXXG motif motif lies at 327–332 (GSGTLG). Cys-499 serves as the catalytic Glycyl thioester intermediate.

The protein belongs to the ATG7 family. In terms of assembly, homodimer.

It is found in the cytoplasm. The protein localises to the preautophagosomal structure. Functionally, E1-like activating enzyme involved in the 2 ubiquitin-like systems required for cytoplasm to vacuole transport (Cvt) and autophagy. Activates ATG12 for its conjugation with ATG5 and ATG8 for its conjugation with phosphatidylethanolamine. Both systems are needed for the ATG8 association to Cvt vesicles and autophagosomes membranes. Autophagy is essential for maintenance of amino acid levels and protein synthesis under nitrogen starvation. Required for selective autophagic degradation of the nucleus (nucleophagy) as well as for mitophagy which contributes to regulate mitochondrial quantity and quality by eliminating the mitochondria to a basal level to fulfill cellular energy requirements and preventing excess ROS production. Plays a role in the regulation of filamentous growth and chronological longevity. This is Ubiquitin-like modifier-activating enzyme ATG7 (ATG7) from Candida glabrata (strain ATCC 2001 / BCRC 20586 / JCM 3761 / NBRC 0622 / NRRL Y-65 / CBS 138) (Yeast).